The chain runs to 691 residues: Elongation factor G (691 aa).

The 276-residue stretch at 8–283 folds into the tr-type G domain; that stretch reads KKVRNIGIAA…AVVAYLPAPD (276 aa). GTP-binding positions include 17–24, 81–85, and 135–138; these read AHIDAGKT, DTPGH, and NKMD.

It belongs to the TRAFAC class translation factor GTPase superfamily. Classic translation factor GTPase family. EF-G/EF-2 subfamily.

Its subcellular location is the cytoplasm. Functionally, catalyzes the GTP-dependent ribosomal translocation step during translation elongation. During this step, the ribosome changes from the pre-translocational (PRE) to the post-translocational (POST) state as the newly formed A-site-bound peptidyl-tRNA and P-site-bound deacylated tRNA move to the P and E sites, respectively. Catalyzes the coordinated movement of the two tRNA molecules, the mRNA and conformational changes in the ribosome. This Campylobacter jejuni subsp. doylei (strain ATCC BAA-1458 / RM4099 / 269.97) protein is Elongation factor G.